The following is a 293-amino-acid chain: Ribosomal protein L11 methyltransferase (293 aa).

S-adenosyl-L-methionine contacts are provided by threonine 145, glycine 166, aspartate 188, and asparagine 230.

It belongs to the methyltransferase superfamily. PrmA family.

Its subcellular location is the cytoplasm. The enzyme catalyses L-lysyl-[protein] + 3 S-adenosyl-L-methionine = N(6),N(6),N(6)-trimethyl-L-lysyl-[protein] + 3 S-adenosyl-L-homocysteine + 3 H(+). Functionally, methylates ribosomal protein L11. In Escherichia coli O139:H28 (strain E24377A / ETEC), this protein is Ribosomal protein L11 methyltransferase.